An 85-amino-acid polypeptide reads, in one-letter code: Kappa-theraphotoxin-Cg1d (85 aa).

The first 21 residues, 1 to 21 (MKVSVLITLAVLGVMFVWASA), serve as a signal peptide directing secretion. Positions 22–51 (AELEERGSDQRDSPAWLKSMERIFQSEERE) are excised as a propeptide. 3 cysteine pairs are disulfide-bonded: C52-C66, C59-C71, and C65-C78.

Belongs to the neurotoxin 10 (Hwtx-1) family. 28 (Jztx-11) subfamily. As to expression, expressed by the venom gland.

Its subcellular location is the secreted. In terms of biological role, probable ion channel inhibitor. This chain is Kappa-theraphotoxin-Cg1d, found in Chilobrachys guangxiensis (Chinese earth tiger tarantula).